Consider the following 202-residue polypeptide: Small ribosomal subunit protein uS4c (202 aa).

The 64-residue stretch at 90 to 153 (MRLDNVIFRL…KSEAIISKNI (64 aa)) folds into the S4 RNA-binding domain.

This sequence belongs to the universal ribosomal protein uS4 family. Part of the 30S ribosomal subunit. Contacts protein S5. The interaction surface between S4 and S5 is involved in control of translational fidelity.

The protein localises to the plastid. Its subcellular location is the chloroplast. One of the primary rRNA binding proteins, it binds directly to 16S rRNA where it nucleates assembly of the body of the 30S subunit. Functionally, with S5 and S12 plays an important role in translational accuracy. This Cyathophorum bulbosum (Moss) protein is Small ribosomal subunit protein uS4c (rps4).